We begin with the raw amino-acid sequence, 146 residues long: Ferredoxin-type protein FwdE (146 aa).

2 4Fe-4S ferredoxin-type domains span residues 90–115 (IKLF…TLDN) and 116–145 (FTVG…FIKE). Cys-125, Cys-128, Cys-131, and Cys-135 together coordinate [4Fe-4S] cluster.

It depends on [4Fe-4S] cluster as a cofactor.

The chain is Ferredoxin-type protein FwdE (fwdE) from Methanocaldococcus jannaschii (strain ATCC 43067 / DSM 2661 / JAL-1 / JCM 10045 / NBRC 100440) (Methanococcus jannaschii).